We begin with the raw amino-acid sequence, 212 residues long: Probable GTP-binding protein EngB (212 aa).

The 173-residue stretch at 38–210 folds into the EngB-type G domain; sequence SLPEIAFVGK…KASLAKCIKP (173 aa). GTP is bound by residues 46–53, 73–77, 91–94, 158–161, and 189–191; these read GKSNVGKS, GRTRQ, DLPG, TKSD, and VSS. Residues S53 and T75 each coordinate Mg(2+).

It belongs to the TRAFAC class TrmE-Era-EngA-EngB-Septin-like GTPase superfamily. EngB GTPase family. Mg(2+) is required as a cofactor.

Its function is as follows. Necessary for normal cell division and for the maintenance of normal septation. The protein is Probable GTP-binding protein EngB of Rickettsia felis (strain ATCC VR-1525 / URRWXCal2) (Rickettsia azadi).